We begin with the raw amino-acid sequence, 278 residues long: MNYILIGVILGIVQGISEWIPISSKTQVLIVSSTLLGLSFNVAYSFGLFMEIGTIAAAIFYFRSEISGLLKALVRMSSRREDYLLLKFLVIVTIITGLVGVPLYLFVISLPILGLPMTVLGVVLLIDGIVIYLSRKNYFPRKGLHDLKLRDIIIVGIAQGLAALPGVSRSGMTTSALILLGVKPEEAFKLSFISLIPAALGAISVTVLFSKHEVSQAVHSVSLSGLLISIVVATFVSIFFINALLRFARTNKVVLLVIILGIMAIISGILSDIAKGFY.

Transmembrane regions (helical) follow at residues 3–23 (YILI…IPIS), 42–62 (VAYS…IFYF), 88–108 (FLVI…LFVI), 112–132 (ILGL…IVIY), 152–172 (IIIV…RSGM), 190–210 (LSFI…VLFS), 225–245 (GLLI…NALL), and 253–273 (VVLL…LSDI).

Belongs to the UppP family.

Its subcellular location is the cell membrane. The enzyme catalyses di-trans,octa-cis-undecaprenyl diphosphate + H2O = di-trans,octa-cis-undecaprenyl phosphate + phosphate + H(+). Its function is as follows. Catalyzes the dephosphorylation of undecaprenyl diphosphate (UPP). The protein is Undecaprenyl-diphosphatase of Saccharolobus solfataricus (strain ATCC 35092 / DSM 1617 / JCM 11322 / P2) (Sulfolobus solfataricus).